The following is a 311-amino-acid chain: Putative protease MJ0651 (311 aa).

Ser-128 acts as the Nucleophile in catalysis. Lys-180 functions as the Proton donor/acceptor in the catalytic mechanism.

The protein belongs to the peptidase S49 family.

This is Putative protease MJ0651 from Methanocaldococcus jannaschii (strain ATCC 43067 / DSM 2661 / JAL-1 / JCM 10045 / NBRC 100440) (Methanococcus jannaschii).